The primary structure comprises 197 residues: Probable nicotinate-nucleotide adenylyltransferase (197 aa).

Belongs to the NadD family.

The catalysed reaction is nicotinate beta-D-ribonucleotide + ATP + H(+) = deamido-NAD(+) + diphosphate. The protein operates within cofactor biosynthesis; NAD(+) biosynthesis; deamido-NAD(+) from nicotinate D-ribonucleotide: step 1/1. Functionally, catalyzes the reversible adenylation of nicotinate mononucleotide (NaMN) to nicotinic acid adenine dinucleotide (NaAD). The polypeptide is Probable nicotinate-nucleotide adenylyltransferase (Porphyromonas gingivalis (strain ATCC 33277 / DSM 20709 / CIP 103683 / JCM 12257 / NCTC 11834 / 2561)).